The primary structure comprises 191 residues: Small ribosomal subunit protein uS4A (191 aa).

A phosphoserine mark is found at Ser50 and Ser161. Positions 107-181 (RRLQTQVFKL…CKRKRLRSQE (75 aa)) constitute an S4 RNA-binding domain. Tyr164 is modified (phosphotyrosine). The segment at 166–191 (GGRPGRCKRKRLRSQEGGEGEEAEEE) is disordered. Ser179 carries the phosphoserine modification.

The protein belongs to the universal ribosomal protein uS4 family. Component of the small ribosomal subunit (SSU). Mature yeast ribosomes consist of a small (40S) and a large (60S) subunit. The 40S small subunit contains 1 molecule of ribosomal RNA (18S rRNA) and at least 33 different proteins. The large 60S subunit contains 3 rRNA molecules (25S, 5.8S and 5S rRNA) and at least 46 different proteins. Interacts with snoRNA U3. uS11 interacts with MPP10. Component of the ribosomal small subunit (SSU) processome composed of at least 40 protein subunits and snoRNA U3.

It localises to the cytoplasm. Its function is as follows. Component of the ribosome, a large ribonucleoprotein complex responsible for the synthesis of proteins in the cell. The small ribosomal subunit (SSU) binds messenger RNAs (mRNAs) and translates the encoded message by selecting cognate aminoacyl-transfer RNA (tRNA) molecules. The large subunit (LSU) contains the ribosomal catalytic site termed the peptidyl transferase center (PTC), which catalyzes the formation of peptide bonds, thereby polymerizing the amino acids delivered by tRNAs into a polypeptide chain. The nascent polypeptides leave the ribosome through a tunnel in the LSU and interact with protein factors that function in enzymatic processing, targeting, and the membrane insertion of nascent chains at the exit of the ribosomal tunnel. uS4 is involved in nucleolar processing of pre-18S ribosomal RNA and ribosome assembly. This is Small ribosomal subunit protein uS4A (rps901) from Schizosaccharomyces pombe (strain 972 / ATCC 24843) (Fission yeast).